We begin with the raw amino-acid sequence, 369 residues long: Tryptophan 2,3-dioxygenase 2 (369 aa).

Substrate-binding positions include Phe-36–His-40 and Arg-107. Heme is bound at residue His-303. Residue Thr-317 participates in substrate binding.

Belongs to the tryptophan 2,3-dioxygenase family. In terms of assembly, homotetramer. It depends on heme as a cofactor.

The enzyme catalyses L-tryptophan + O2 = N-formyl-L-kynurenine. The protein operates within amino-acid degradation; L-tryptophan degradation via kynurenine pathway; L-kynurenine from L-tryptophan: step 1/2. In terms of biological role, heme-dependent dioxygenase that catalyzes the oxidative cleavage of the L-tryptophan (L-Trp) pyrrole ring and converts L-tryptophan to N-formyl-L-kynurenine. Catalyzes the oxidative cleavage of the indole moiety. This Ralstonia nicotianae (strain ATCC BAA-1114 / GMI1000) (Ralstonia solanacearum) protein is Tryptophan 2,3-dioxygenase 2.